The primary structure comprises 158 residues: Small ribosomal subunit protein uS9 (158 aa).

This sequence belongs to the universal ribosomal protein uS9 family.

This Rhodopseudomonas palustris (strain HaA2) protein is Small ribosomal subunit protein uS9.